Here is a 152-residue protein sequence, read N- to C-terminus: uncharacterized protein (152 aa).

A helical membrane pass occupies residues 12–34 (ALLYLGGGLLAMIYGLITFFMAF).

This sequence to B.subtilis YfjD.

The protein resides in the membrane. This is an uncharacterized protein from Bacillus subtilis (strain 168).